The sequence spans 285 residues: Nudix hydrolase 15, mitochondrial (285 aa).

The transit peptide at 1 to 23 directs the protein to the mitochondrion; sequence MFLLYRRLPSFARTTTTTLLCKS. N-acetylmethionine is present on M24. 2 disordered regions span residues 51-72 and 129-152; these read RQYK…TDQE and THSG…GMTA. The Nudix hydrolase domain maps to 99–255; the sequence is PKRAAVLICL…DKDYMIWGLT (157 aa). Positions 140-161 match the Nudix box motif; sequence KAEEDDKDDGMTATREAEEEIG. E155 and E159 together coordinate Mg(2+).

This sequence belongs to the Nudix hydrolase family. Requires Mg(2+) as cofactor. It depends on Mn(2+) as a cofactor. As to expression, expressed in roots, leaves, stems and inflorescences.

Its subcellular location is the mitochondrion. Functionally, coenzyme A diphosphatase which mediates the cleavage of oxidized CoA. Can use malonyl-CoA, hexanoyl-CoA, lauroyl-CoA, myristoyl-CoA and palmitoyl-CoA as substrates, but not isobutyryl-CoA or propionyl-CoA. The chain is Nudix hydrolase 15, mitochondrial (NUDT15) from Arabidopsis thaliana (Mouse-ear cress).